A 301-amino-acid chain; its full sequence is Protoheme IX farnesyltransferase (301 aa).

The next 9 membrane-spanning stretches (helical) occupy residues Val16 to Pro36, Ile41 to Ile61, Val93 to Ile113, Thr114 to Lys134, Ile141 to Gly161, Ser172 to Phe192, Gln217 to Met237, Ser238 to Trp258, and Phe273 to Leu293.

The protein belongs to the UbiA prenyltransferase family. Protoheme IX farnesyltransferase subfamily.

It is found in the cell inner membrane. The catalysed reaction is heme b + (2E,6E)-farnesyl diphosphate + H2O = Fe(II)-heme o + diphosphate. Its pathway is porphyrin-containing compound metabolism; heme O biosynthesis; heme O from protoheme: step 1/1. In terms of biological role, converts heme B (protoheme IX) to heme O by substitution of the vinyl group on carbon 2 of heme B porphyrin ring with a hydroxyethyl farnesyl side group. This is Protoheme IX farnesyltransferase from Xylella fastidiosa (strain 9a5c).